Reading from the N-terminus, the 400-residue chain is Acetate kinase (400 aa).

Asn10 serves as a coordination point for Mg(2+). Lys17 provides a ligand contact to ATP. Arg91 is a binding site for substrate. Asp148 serves as the catalytic Proton donor/acceptor. Residues 208-212, 283-285, and 331-335 contribute to the ATP site; these read HLGNG, DCR, and GIGEN. Glu385 provides a ligand contact to Mg(2+).

This sequence belongs to the acetokinase family. In terms of assembly, homodimer. It depends on Mg(2+) as a cofactor. Mn(2+) serves as cofactor.

The protein resides in the cytoplasm. It carries out the reaction acetate + ATP = acetyl phosphate + ADP. It participates in metabolic intermediate biosynthesis; acetyl-CoA biosynthesis; acetyl-CoA from acetate: step 1/2. Its function is as follows. Catalyzes the formation of acetyl phosphate from acetate and ATP. Can also catalyze the reverse reaction. In Shewanella putrefaciens (strain CN-32 / ATCC BAA-453), this protein is Acetate kinase.